A 315-amino-acid polypeptide reads, in one-letter code: Aspartate carbamoyltransferase catalytic subunit (315 aa).

2 residues coordinate carbamoyl phosphate: Arg-64 and Thr-65. Position 92 (Lys-92) interacts with L-aspartate. Residues Arg-114, His-142, and Gln-145 each coordinate carbamoyl phosphate. L-aspartate is bound by residues Arg-175 and Arg-229. 2 residues coordinate carbamoyl phosphate: Gly-270 and Pro-271.

Belongs to the aspartate/ornithine carbamoyltransferase superfamily. ATCase family. As to quaternary structure, heterododecamer (2C3:3R2) of six catalytic PyrB chains organized as two trimers (C3), and six regulatory PyrI chains organized as three dimers (R2).

The catalysed reaction is carbamoyl phosphate + L-aspartate = N-carbamoyl-L-aspartate + phosphate + H(+). It functions in the pathway pyrimidine metabolism; UMP biosynthesis via de novo pathway; (S)-dihydroorotate from bicarbonate: step 2/3. Catalyzes the condensation of carbamoyl phosphate and aspartate to form carbamoyl aspartate and inorganic phosphate, the committed step in the de novo pyrimidine nucleotide biosynthesis pathway. The polypeptide is Aspartate carbamoyltransferase catalytic subunit (Bradyrhizobium diazoefficiens (strain JCM 10833 / BCRC 13528 / IAM 13628 / NBRC 14792 / USDA 110)).